The primary structure comprises 401 residues: Argininosuccinate synthase (401 aa).

ATP-binding positions include 9 to 17 (AFSGGLDTS) and A35. Residues Y88 and S93 each coordinate L-citrulline. G117 serves as a coordination point for ATP. Positions 119, 123, and 124 each coordinate L-aspartate. N123 is an L-citrulline binding site. L-citrulline-binding residues include R127 and Y273.

The protein belongs to the argininosuccinate synthase family. Type 1 subfamily. In terms of assembly, homotetramer.

It localises to the cytoplasm. It catalyses the reaction L-citrulline + L-aspartate + ATP = 2-(N(omega)-L-arginino)succinate + AMP + diphosphate + H(+). Its pathway is amino-acid biosynthesis; L-arginine biosynthesis; L-arginine from L-ornithine and carbamoyl phosphate: step 2/3. In Xylella fastidiosa (strain Temecula1 / ATCC 700964), this protein is Argininosuccinate synthase.